The following is an 88-amino-acid chain: Small ribosomal subunit protein bS20 (88 aa).

The tract at residues 1-20 (MANTAQARKRARQAVVQNAH) is disordered.

Belongs to the bacterial ribosomal protein bS20 family.

In terms of biological role, binds directly to 16S ribosomal RNA. The polypeptide is Small ribosomal subunit protein bS20 (Ralstonia pickettii (strain 12J)).